Reading from the N-terminus, the 259-residue chain is ATP synthase subunit a 1 (259 aa).

Helical transmembrane passes span 30 to 50 (TLHVDTLFFSVFLGAVFLFFF), 90 to 110 (LIAPLALSIFAWVFLMNAMDL), 135 to 155 (DLNATFGMSISVFFLIIFYSL), 209 to 229 (LIFILIALLPWWVQPALSFPW), and 230 to 250 (AVFHILIITLQAFIFMVLTIV).

This sequence belongs to the ATPase A chain family. In terms of assembly, F-type ATPases have 2 components, CF(1) - the catalytic core - and CF(0) - the membrane proton channel. CF(1) has five subunits: alpha(3), beta(3), gamma(1), delta(1), epsilon(1). CF(0) has three main subunits: a(1), b(2) and c(9-12). The alpha and beta chains form an alternating ring which encloses part of the gamma chain. CF(1) is attached to CF(0) by a central stalk formed by the gamma and epsilon chains, while a peripheral stalk is formed by the delta and b chains.

The protein resides in the cell inner membrane. Key component of the proton channel; it plays a direct role in the translocation of protons across the membrane. In Methylococcus capsulatus (strain ATCC 33009 / NCIMB 11132 / Bath), this protein is ATP synthase subunit a 1.